The primary structure comprises 1344 residues: Period circadian protein homolog 2 (1344 aa).

Disordered regions lie at residues 1–21 (MDCI…PEQQ) and 42–112 (EYSG…NGKD). Residues 10-21 (YSSTEEQNPEQQ) are compositionally biased toward polar residues. Positions 78–89 (SSGSSGNDFSGN) are enriched in low complexity. A compositionally biased stretch (basic and acidic residues) spans 99–111 (HDSHGHESDENGK). A Nuclear export signal 1 motif is present at residues 161–170 (LLKTLQELKA). In terms of domain architecture, PAS 1 spans 231-298 (ITSEYIMKNA…FYTSTTPYRL (68 aa)). The LXXLL signature appears at 358–362 (LCCVL). Residues 371 to 437 (YEAPRIPPDK…MLAIHKKILQ (67 aa)) enclose the PAS 2 domain. Residues 445 to 488 (YSPIRFCTRNGDYITMDTSWSSFINPWSRKVSFIIGRHKVRTGP) form the PAC domain. A Nuclear export signal 2 motif is present at residues 512–521 (ITEQIYRLLL). 5 disordered regions span residues 531 to 609 (GYGS…QVKD), 661 to 686 (AKRK…NAIQ), 823 to 894 (LQDK…WSPS), 1038 to 1065 (TETR…PLFQ), and 1107 to 1126 (TTDA…MDAQ). The segment covering 549–559 (SSSDSTGNNND) has biased composition (low complexity). Composition is skewed to basic and acidic residues over residues 560–573 (DTQK…DARK) and 583–597 (TENK…EPSA). A compositionally biased stretch (polar residues) spans 667-684 (PSSSVNSSVHEQKASVNA). Positions 825–836 (DKPKGRPGERGG) are enriched in basic and acidic residues. Residues 851-865 (KKSGKNRKSKRIKPQ) carry the Nuclear localization signal motif. Basic residues predominate over residues 852–862 (KSGKNRKSKRI). Polar residues-rich tracts occupy residues 865–875 (QESSDSTTSGT), 885–894 (GLNTTAWSPS), and 1045–1059 (SRSC…QDQA). The LXXLL signature appears at 1138–1142 (LDILL). The segment covering 1149–1172 (GTGSASSGSGVSAAAESLGSGSNG) has biased composition (low complexity). Residues 1149-1197 (GTGSASSGSGVSAAAESLGSGSNGCDMSGSRTGSSETSHTSKYFGSIDS) are disordered. Positions 1177-1197 (GSRTGSSETSHTSKYFGSIDS) are enriched in polar residues. The interval 1244 to 1344 (SRDLETVLKE…PLSQVNEEQT (101 aa)) is CRY binding domain.

In terms of assembly, component of the circadian clock oscillator which includes the CRY proteins, CLOCK or NPAS2, BMAL1 or BMAL2, CSNK1E, and the PER proteins. Interacts directly with PER3, and through a C-terminal domain, with CRY1 and CRY2.

The protein resides in the nucleus. It is found in the cytoplasm. Its function is as follows. Transcriptional repressor which forms a core component of the circadian clock. The circadian clock, an internal time-keeping system, regulates various physiological processes through the generation of approximately 24 hour circadian rhythms in gene expression, which are translated into rhythms in metabolism and behavior. It is derived from the Latin roots 'circa' (about) and 'diem' (day) and acts as an important regulator of a wide array of physiological functions including metabolism, sleep, body temperature, blood pressure, endocrine, immune, cardiovascular, and renal function. Consists of two major components: the central clock, residing in the suprachiasmatic nucleus (SCN) of the brain, and the peripheral clocks that are present in nearly every tissue and organ system. Both the central and peripheral clocks can be reset by environmental cues, also known as Zeitgebers (German for 'timegivers'). The predominant Zeitgeber for the central clock is light, which is sensed by retina and signals directly to the SCN. The central clock entrains the peripheral clocks through neuronal and hormonal signals, body temperature and feeding-related cues, aligning all clocks with the external light/dark cycle. Circadian rhythms allow an organism to achieve temporal homeostasis with its environment at the molecular level by regulating gene expression to create a peak of protein expression once every 24 hours to control when a particular physiological process is most active with respect to the solar day. Transcription and translation of core clock components (CLOCK, NPAS2, BMAL1, BMAL2, PER1, PER2, PER3, CRY1 and CRY2) plays a critical role in rhythm generation, whereas delays imposed by post-translational modifications (PTMs) are important for determining the period (tau) of the rhythms (tau refers to the period of a rhythm and is the length, in time, of one complete cycle). A diurnal rhythm is synchronized with the day/night cycle, while the ultradian and infradian rhythms have a period shorter and longer than 24 hours, respectively. Disruptions in the circadian rhythms contribute to the pathology of cardiovascular diseases, cancer, metabolic syndrome and aging. A transcription/translation feedback loop (TTFL) forms the core of the molecular circadian clock mechanism. Transcription factors, CLOCK or NPAS2 and BMAL1 or BMAL2, form the positive limb of the feedback loop, act in the form of a heterodimer and activate the transcription of core clock genes and clock-controlled genes (involved in key metabolic processes), harboring E-box elements (5'-CACGTG-3') within their promoters. The core clock genes: PER1/2/3 and CRY1/2 which are transcriptional repressors form the negative limb of the feedback loop and interact with the CLOCK|NPAS2-BMAL1|BMAL2 heterodimer inhibiting its activity and thereby negatively regulating their own expression. This heterodimer also activates nuclear receptors NR1D1/2 and RORA/B/G, which form a second feedback loop and which activate and repress BMAL1 transcription, respectively. PER1 and PER2 proteins transport CRY1 and CRY2 into the nucleus with appropriate circadian timing, but also contribute directly to repression of clock-controlled target genes through interaction with several classes of RNA-binding proteins, helicases and others transcriptional repressors. PER appears to regulate circadian control of transcription by at least three different modes. First, interacts directly with the CLOCK-BMAL1 at the tail end of the nascent transcript peak to recruit complexes containing the SIN3-HDAC that remodel chromatin to repress transcription. Second, brings H3K9 methyltransferases such as SUV39H1 and SUV39H2 to the E-box elements of the circadian target genes, like PER2 itself or PER1. The recruitment of each repressive modifier to the DNA seems to be very precisely temporally orchestrated by the large PER complex, the deacetylases acting before than the methyltransferases. Additionally, large PER complexes are also recruited to the target genes 3' termination site through interactions with RNA-binding proteins and helicases that may play a role in transcription termination to regulate transcription independently of CLOCK-BMAL1 interactions. This chain is Period circadian protein homolog 2 (PER2), found in Gallus gallus (Chicken).